Reading from the N-terminus, the 130-residue chain is Small ribosomal subunit protein uS8 (130 aa).

This sequence belongs to the universal ribosomal protein uS8 family. Part of the 30S ribosomal subunit. Contacts proteins S5 and S12.

Functionally, one of the primary rRNA binding proteins, it binds directly to 16S rRNA central domain where it helps coordinate assembly of the platform of the 30S subunit. The sequence is that of Small ribosomal subunit protein uS8 from Actinobacillus succinogenes (strain ATCC 55618 / DSM 22257 / CCUG 43843 / 130Z).